An 873-amino-acid chain; its full sequence is MSRYDPAATESRWQAAWDEAGVFTARHDPSRPKYYVLEMFPYPSGRIHMGHVRNYTMGDVVARQKAAAGYSVLHPMGWDAFGMPAENAAMERGGHPKDWTYGNIADMRAQMKPLGLSIDWSREFATCDPEYYGQQQAMFIDMLEAGLIYRKNAVVNWDPVDMTVLANEQVIDGKGWRSNAPVERRELTQWFFRISDYAGELLEALDRLKDWPEKVRLMQANWIGQSRGLQFAFSTVNAPEGFDRLEVYTTRPDTLLGASFAAISPDHPLAKHLERHDAGVAEFVAECRRVGTSEEALEKAEKKGFDTGIRVRHPFDTALELPVYIANFILMDYGTGAIFGCPAHDQRDFEFASKYGLPIPPVFVAEGTEEAPLTEAFVPMKSERVAYVRGFAGAEIQTGEEAVAAAIDFCESKGVGRGVTNYRLRDWGISRQRYWGCPIPVIHCETCGVVPEAKENLPVRLPDDVTFDVPGNPLDRHPTWRDCTCPKCGAKARRETDTMDTFVDSSWYYARFTAPRATTPTDPEEAEYWMNVDQYIGGIEHAILHLLYSRFFARAMQKTGHLPAKAIEPFNALFTQGMVTHEAYYSEEAKQEPVWQGMLEPGESPDTQMTVRHITYHFPEEVERTEDGAILKTTGQKLKVIPSTKMSKSKKNVVDPMNIISQFGADTARWFVMSDSPPERDVEWTASGAEAAFKHLGRVWRLADEIARAEGAPTAEDVALDRATAKAIAEVTQGIEGFAFNKAIAKLYEFTNTLSRSGAGAEAKRRAMRTMAQLMSPMVPHLAEEVWSMLGGEGLVAQAPWPKADPALLVDDMVTLPIQINGKRRAEVTVPKDMAASEVEKLVLADEAVQRALSGGAPKKLIVVPGRIVNVVI.

Residues 41–51 (PYPSGRIHMGH) carry the 'HIGH' region motif. The 'KMSKS' region motif lies at 645–649 (KMSKS). Residue Lys-648 coordinates ATP.

Belongs to the class-I aminoacyl-tRNA synthetase family.

It localises to the cytoplasm. The enzyme catalyses tRNA(Leu) + L-leucine + ATP = L-leucyl-tRNA(Leu) + AMP + diphosphate. This is Leucine--tRNA ligase from Cereibacter sphaeroides (strain ATCC 17025 / ATH 2.4.3) (Rhodobacter sphaeroides).